A 446-amino-acid polypeptide reads, in one-letter code: NADH oxidase (446 aa).

Residues Gly7–Ala11, Asp32, Cys42, Val79, Ala109–Ser112, Lys131, and Tyr158 each bind FAD. His10 (proton acceptor) is an active-site residue. Cys42 acts as the Redox-active in catalysis. Cys42 is modified (cysteine sulfinic acid (-SO2H)). NAD(+) is bound by residues Ile159, Asp178, Tyr187, and Gly244. Asp282 serves as a coordination point for FAD. Ala298 contacts NAD(+). FAD is bound by residues Leu299, Ala300, and Ser301. Gly329 is a binding site for NAD(+). An FAD-binding site is contributed by Phe427.

This sequence belongs to the class-III pyridine nucleotide-disulfide oxidoreductase family. Homodimer. Requires FAD as cofactor.

The catalysed reaction is 2 NADH + O2 + 2 H(+) = 2 NAD(+) + 2 H2O. With respect to regulation, inhibited by hydrogen peroxide, sulfhydryl reagents and quinine, but not by EDTA. Catalyzes the four-electron reduction of molecular oxygen to water. Active on beta-NADH, but not on alpha-NADH, beta-NADPH or alpha-NADPH. Under aerobic conditions, oxygen acts as the electron acceptor. Under anaerobic conditions, DCIP and MB can replace oxygen as the electron acceptor. In Lactococcus lactis subsp. cremoris (strain MG1363), this protein is NADH oxidase.